The primary structure comprises 815 residues: Echinoderm microtubule-associated protein-like 1 (815 aa).

A coiled-coil region spans residues 31-72; that stretch reads SMEVTDRIASLEQRVQMQEDDIQLLKSALADVVRRLNITEEQ. Residues 77–179 form a disordered region; the sequence is NRKGPTKARP…NSESKPKEPV (103 aa). Residues 92–101 show a composition bias toward polar residues; that stretch reads PLRTTVNNGT. Ser113 bears the Phosphoserine mark. Over residues 126-138 the composition is skewed to polar residues; that stretch reads TKSNIKRTSSSER. The span at 143–153 shows a compositional bias: basic and acidic residues; the sequence is GRRESNGDSRG. Residues 156–168 show a composition bias toward low complexity; the sequence is NRTGSTSSSSSGK. The tandem atypical propeller in EMLs stretch occupies residues 176–815; sequence KEPVFSAEEG…DTSIMQWRVI (640 aa). WD repeat units lie at residues 261 to 310, 315 to 358, 363 to 400, 409 to 446, 450 to 489, 493 to 530, 535 to 572, 578 to 613, 617 to 655, 664 to 701, 709 to 768, and 775 to 814; these read EQLQ…IWDS, TLHV…VWDW, KLAD…FWTL, QGLF…VWGK, RISY…SWSG, KLRK…LQGT, FTPI…LWDA, VWDK…VFDT, DLVT…IYGV, RVGK…YWVP, SVET…LFSY, and APSH…QWRV.

Belongs to the WD repeat EMAP family. In terms of assembly, homotrimer; self-association is mediated by the N-terminal coiled coil. Does not interact with EML3. Binds repolymerizing microtubules. Binds unpolymerized tubulins via its WD repeat region. Interacts with TASOR. As to expression, ubiquitous; expressed in most tissues with the exception of thymus and peripheral blood lymphocytes.

The protein localises to the cytoplasm. Its subcellular location is the perinuclear region. It localises to the cytoskeleton. In terms of biological role, modulates the assembly and organization of the microtubule cytoskeleton, and probably plays a role in regulating the orientation of the mitotic spindle and the orientation of the plane of cell division. Required for normal proliferation of neuronal progenitor cells in the developing brain and for normal brain development. Does not affect neuron migration per se. This Homo sapiens (Human) protein is Echinoderm microtubule-associated protein-like 1 (EML1).